The following is a 184-amino-acid chain: Cell division protein ZapC (184 aa).

Belongs to the ZapC family. Interacts directly with FtsZ.

It is found in the cytoplasm. In terms of biological role, contributes to the efficiency of the cell division process by stabilizing the polymeric form of the cell division protein FtsZ. Acts by promoting interactions between FtsZ protofilaments and suppressing the GTPase activity of FtsZ. The sequence is that of Cell division protein ZapC from Idiomarina loihiensis (strain ATCC BAA-735 / DSM 15497 / L2-TR).